A 151-amino-acid polypeptide reads, in one-letter code: Large ribosomal subunit protein bL9 (151 aa).

The protein belongs to the bacterial ribosomal protein bL9 family.

Binds to the 23S rRNA. In Rhodococcus erythropolis (strain PR4 / NBRC 100887), this protein is Large ribosomal subunit protein bL9.